The chain runs to 242 residues: Uridylate kinase (242 aa).

17–20 (KLSG) serves as a coordination point for ATP. Position 59 (G59) interacts with UMP. ATP is bound by residues G60 and R64. UMP is bound by residues D79 and 140-147 (TGNPFFTT). 3 residues coordinate ATP: T167, Y173, and D176.

The protein belongs to the UMP kinase family. In terms of assembly, homohexamer.

The protein localises to the cytoplasm. It carries out the reaction UMP + ATP = UDP + ADP. It functions in the pathway pyrimidine metabolism; CTP biosynthesis via de novo pathway; UDP from UMP (UMPK route): step 1/1. Inhibited by UTP. Its function is as follows. Catalyzes the reversible phosphorylation of UMP to UDP. This is Uridylate kinase from Marinobacter nauticus (strain ATCC 700491 / DSM 11845 / VT8) (Marinobacter aquaeolei).